Here is a 234-residue protein sequence, read N- to C-terminus: Thiamine import ATP-binding protein ThiQ (234 aa).

Residues 2-230 (LVLDDVQYTY…HPSKTLQAFV (229 aa)) enclose the ABC transporter domain. 32 to 39 (GPSGAGKS) is an ATP binding site.

The protein belongs to the ABC transporter superfamily. Thiamine importer (TC 3.A.1.19.1) family. As to quaternary structure, the complex is composed of two ATP-binding proteins (ThiQ), two transmembrane proteins (ThiP) and a solute-binding protein (ThiB).

Its subcellular location is the cell inner membrane. The catalysed reaction is thiamine(out) + ATP + H2O = thiamine(in) + ADP + phosphate + H(+). Its function is as follows. Part of the ABC transporter complex ThiBPQ involved in thiamine import. Responsible for energy coupling to the transport system. In Vibrio parahaemolyticus serotype O3:K6 (strain RIMD 2210633), this protein is Thiamine import ATP-binding protein ThiQ.